The chain runs to 129 residues: Small ribosomal subunit protein uS11 (129 aa).

Belongs to the universal ribosomal protein uS11 family. Part of the 30S ribosomal subunit. Interacts with proteins S7 and S18. Binds to IF-3.

In terms of biological role, located on the platform of the 30S subunit, it bridges several disparate RNA helices of the 16S rRNA. Forms part of the Shine-Dalgarno cleft in the 70S ribosome. The polypeptide is Small ribosomal subunit protein uS11 (Synechococcus sp. (strain RCC307)).